A 221-amino-acid chain; its full sequence is MYKILIADDHPLFREAIHNVITDGFPGSEVMETADLDSALSLTGQHDDLDLILLDLNMPGMHGLGGLINLRNEAPTIPVVIVSAEQDKQVVLQAITYGAVGFITKSSPRSQMTDAIEQILNGNVYLPPDIIRTQKSTGRRNQSEHAGFAPELLQALTRKQLLVLERMTKGESNKQIAYNLDIAETTVKAHVSAILRKLNVHNRVQAILSAGDIDFTAYLRR.

The 118-residue stretch at 3-120 folds into the Response regulatory domain; the sequence is KILIADDHPL…QMTDAIEQIL (118 aa). At Asp55 the chain carries 4-aspartylphosphate. The 66-residue stretch at 149-214 folds into the HTH luxR-type domain; the sequence is APELLQALTR…QAILSAGDID (66 aa). Residues 173–192 constitute a DNA-binding region (H-T-H motif); sequence NKQIAYNLDIAETTVKAHVS.

In terms of biological role, positive activator for glycerol metabolism. Regulates the expression of qedA in a positive manner and governs the expression of ADH I and ADH IIB. General regulator of quinoprotein ethanol oxidation and affects expression of ADH IIG activity but is not the sole regulator. The sequence is that of Glycerol metabolism activator from Pseudomonas putida (Arthrobacter siderocapsulatus).